Here is a 136-residue protein sequence, read N- to C-terminus: ATP synthase epsilon chain (136 aa).

Belongs to the ATPase epsilon chain family. F-type ATPases have 2 components, CF(1) - the catalytic core - and CF(0) - the membrane proton channel. CF(1) has five subunits: alpha(3), beta(3), gamma(1), delta(1), epsilon(1). CF(0) has three main subunits: a, b and c.

Its subcellular location is the cell membrane. Its function is as follows. Produces ATP from ADP in the presence of a proton gradient across the membrane. The sequence is that of ATP synthase epsilon chain from Ureaplasma parvum serovar 3 (strain ATCC 27815 / 27 / NCTC 11736).